A 564-amino-acid chain; its full sequence is Keratin, type II cytoskeletal 6B (564 aa).

The segment covering 1–11 (MASTSTTIRSH) has biased composition (low complexity). Residues 1-23 (MASTSTTIRSHSSSRRGFSANSA) form a disordered region. Residue A2 is modified to N-acetylalanine. A head region spans residues 2 to 162 (ASTSTTIRSH…DPAIQRVRAE (161 aa)). The segment at 163-198 (EREQIKTLNNKFASFIDKVRFLEQQNKVLDTKWTLL) is coil 1A. Positions 163–476 (EREQIKTLNN…KLLEGEECRL (314 aa)) constitute an IF rod domain. The tract at residues 199 to 217 (QEQGTKTVRQNLEPLFEQY) is linker 1. The tract at residues 218 to 309 (INNLRRQLDN…ALYDAELSQM (92 aa)) is coil 1B. Residues 310 to 333 (QTHISDTSVVLSMDNNRNLDLDSI) are linker 12. Positions 334–472 (IAEVKAQYEE…ATYRKLLEGE (139 aa)) are coil 2. The tract at residues 473–564 (ECRLNGEGVG…SSSSRKSYKH (92 aa)) is tail. A disordered region spans residues 533–564 (RATGGGLSSVGGGSSTIKYTTTSSSSRKSYKH). Gly residues predominate over residues 534 to 546 (ATGGGLSSVGGGS). Over residues 547–564 (STIKYTTTSSSSRKSYKH) the composition is skewed to low complexity.

The protein belongs to the intermediate filament family. In terms of assembly, heterodimer of a type I and a type II keratin. KRT6 isomers associate with KRT16 and/or KRT17. As to expression, constitutively expressed in distinct types of epithelia such as those in oral mucosa, esophagus, papillae of tongue and hair follicle outer root sheath.

This chain is Keratin, type II cytoskeletal 6B (KRT6B), found in Homo sapiens (Human).